The primary structure comprises 621 residues: Chaperone protein HtpG (621 aa).

The interval 1–328 (MIQEKKKFDA…SEDLPLNISR (328 aa)) is a; substrate-binding. The b stretch occupies residues 329–544 (ESLQHNSVLE…DAAMDIRMER (216 aa)). The interval 475–494 (SDIDVEQTTSQSEAKNTDSK) is disordered. Residues 545–621 (FLIEQKQIAN…LNDIVQKAIL (77 aa)) form a c region.

The protein belongs to the heat shock protein 90 family. In terms of assembly, homodimer.

It is found in the cytoplasm. Molecular chaperone. Has ATPase activity. This Rickettsia rickettsii (strain Iowa) protein is Chaperone protein HtpG.